We begin with the raw amino-acid sequence, 396 residues long: Elongation factor Tu (396 aa).

The 195-residue stretch at 11–205 (KPHVNIGTIG…TVDEYVPTPE (195 aa)) folds into the tr-type G domain. Residues 20-27 (GHVDHGKT) are G1. Residue 20–27 (GHVDHGKT) participates in GTP binding. Thr27 contacts Mg(2+). A G2 region spans residues 61–65 (GITIN). The segment at 82–85 (DAPG) is G3. GTP is bound by residues 82 to 86 (DAPGH) and 137 to 140 (NKTD). The interval 137-140 (NKTD) is G4. Residues 175–177 (SAL) are G5.

This sequence belongs to the TRAFAC class translation factor GTPase superfamily. Classic translation factor GTPase family. EF-Tu/EF-1A subfamily. In terms of assembly, monomer.

The protein resides in the cytoplasm. The enzyme catalyses GTP + H2O = GDP + phosphate + H(+). GTP hydrolase that promotes the GTP-dependent binding of aminoacyl-tRNA to the A-site of ribosomes during protein biosynthesis. The chain is Elongation factor Tu from Latilactobacillus sakei subsp. sakei (strain 23K) (Lactobacillus sakei subsp. sakei).